A 375-amino-acid chain; its full sequence is Alcohol dehydrogenase E chain (375 aa).

Serine 2 bears the N-acetylserine mark. Cysteine 47, serine 49, histidine 68, cysteine 98, cysteine 101, cysteine 104, cysteine 112, and cysteine 175 together coordinate Zn(2+). An alcohol is bound by residues serine 49 and histidine 68. Position 49 (serine 49) interacts with NAD(+). NAD(+)-binding positions include 200-205, aspartate 224, lysine 229, valine 293, 293-295, phenylalanine 320, and arginine 370; these read GLGGVG and VGV.

The protein belongs to the zinc-containing alcohol dehydrogenase family. Class-I subfamily. Dimer of identical or non-identical chains of two types (E and S) coded by 2 separate genes at different loci. Zn(2+) is required as a cofactor.

Its subcellular location is the cytoplasm. It catalyses the reaction a primary alcohol + NAD(+) = an aldehyde + NADH + H(+). It carries out the reaction a secondary alcohol + NAD(+) = a ketone + NADH + H(+). This Equus caballus (Horse) protein is Alcohol dehydrogenase E chain.